The primary structure comprises 399 residues: Elongation factor Tu (399 aa).

Positions 10–204 (KPHVNIGTIG…AVDASIPEPE (195 aa)) constitute a tr-type G domain. The G1 stretch occupies residues 19 to 26 (GHVDHGKT). Residue 19-26 (GHVDHGKT) coordinates GTP. T26 serves as a coordination point for Mg(2+). The interval 60 to 64 (GITIN) is G2. The tract at residues 81–84 (DCPG) is G3. GTP-binding positions include 81 to 85 (DCPGH) and 136 to 139 (NKCD). The segment at 136–139 (NKCD) is G4. Residues 174-176 (SGL) are G5.

Belongs to the TRAFAC class translation factor GTPase superfamily. Classic translation factor GTPase family. EF-Tu/EF-1A subfamily. In terms of assembly, monomer.

The protein resides in the cytoplasm. It catalyses the reaction GTP + H2O = GDP + phosphate + H(+). Functionally, GTP hydrolase that promotes the GTP-dependent binding of aminoacyl-tRNA to the A-site of ribosomes during protein biosynthesis. The sequence is that of Elongation factor Tu from Prochlorococcus marinus (strain MIT 9515).